A 599-amino-acid polypeptide reads, in one-letter code: Sulfite reductase [NADPH] flavoprotein alpha-component (599 aa).

The Flavodoxin-like domain maps to 64 to 202 (VTLISASQTG…AASEWRARVV (139 aa)). Residues 70-75 (SQTGNA), 117-120 (STQG), and 153-162 (LGDTSYEFFC) contribute to the FMN site. An FAD-binding FR-type domain is found at 234–448 (DAPLAATLSV…IEHNDNFRLP (215 aa)). Residues Thr322, Ala356, 386–389 (RLYS), 404–406 (TVG), Tyr410, and 419–422 (GGAS) each bind FAD. NADP(+) contacts are provided by residues 519–520 (SR), 525–529 (KIYVQ), and Asp561. An FAD-binding site is contributed by Tyr599.

Belongs to the NADPH-dependent sulphite reductase flavoprotein subunit CysJ family. It in the N-terminal section; belongs to the flavodoxin family. This sequence in the C-terminal section; belongs to the flavoprotein pyridine nucleotide cytochrome reductase family. As to quaternary structure, alpha(8)-beta(8). The alpha component is a flavoprotein, the beta component is a hemoprotein. It depends on FAD as a cofactor. FMN serves as cofactor.

It carries out the reaction hydrogen sulfide + 3 NADP(+) + 3 H2O = sulfite + 3 NADPH + 4 H(+). The protein operates within sulfur metabolism; hydrogen sulfide biosynthesis; hydrogen sulfide from sulfite (NADPH route): step 1/1. Functionally, component of the sulfite reductase complex that catalyzes the 6-electron reduction of sulfite to sulfide. This is one of several activities required for the biosynthesis of L-cysteine from sulfate. The flavoprotein component catalyzes the electron flow from NADPH -&gt; FAD -&gt; FMN to the hemoprotein component. This is Sulfite reductase [NADPH] flavoprotein alpha-component from Salmonella paratyphi B (strain ATCC BAA-1250 / SPB7).